We begin with the raw amino-acid sequence, 378 residues long: Lysocardiolipin acyltransferase 1 (378 aa).

A run of 2 helical transmembrane segments spans residues 9-29 and 46-66; these read FVVA…GPFL and IVAT…GAKV. The short motif at 85–90 is the HXXXXD motif element; it reads HRTRMD. The next 2 helical transmembrane spans lie at 302 to 322 and 336 to 358; these read LRVL…PMGT and FAAM…LIEL.

It belongs to the 1-acyl-sn-glycerol-3-phosphate acyltransferase family.

It localises to the endoplasmic reticulum membrane. It catalyses the reaction a 1-acyl-sn-glycero-3-phosphate + an acyl-CoA = a 1,2-diacyl-sn-glycero-3-phosphate + CoA. It carries out the reaction a 1-acyl-sn-glycero-3-phospho-(1D-myo-inositol) + an acyl-CoA = a 1,2-diacyl-sn-glycero-3-phospho-(1D-myo-inositol) + CoA. The catalysed reaction is 1-acyl-sn-glycero-3-phospho-(1'-sn-glycerol) + an acyl-CoA = a 1,2-diacyl-sn-glycero-3-phospho-(1'-sn-glycerol) + CoA. The enzyme catalyses 1-hexadecanoyl-sn-glycero-3-phosphate + (9Z)-octadecenoyl-CoA = 1-hexadecanoyl-2-(9Z-octadecenoyl)-sn-glycero-3-phosphate + CoA. It catalyses the reaction 1-(9Z-octadecenoyl)-sn-glycero-3-phosphate + (9Z)-octadecenoyl-CoA = 1,2-di-(9Z-octadecenoyl)-sn-glycero-3-phosphate + CoA. It carries out the reaction 1-(9Z,12Z)-octadecadienoyl-sn-glycero-3-phosphate + (9Z)-octadecenoyl-CoA = 1-(9Z,12Z)-octadecadienoyl-2-(9Z)-octadecenoyl-sn-glycero-3-phosphate + CoA. The catalysed reaction is 1-(9Z,12Z,15Z)-octadecatrienoyl-sn-glycero-3-phosphate + (9Z)-octadecenoyl-CoA = 1-(9Z,12Z,15Z)-octadecatrienoyl-2-(9Z)-octadecenoyl-sn-glycero-3-phosphate + CoA. The enzyme catalyses 1-(9Z-octadecenoyl)-sn-glycero-3-phosphate + hexadecanoyl-CoA = 1-(9Z)-octadecenoyl-2-hexadecanoyl-sn-glycero-3-phosphate + CoA. It catalyses the reaction 1-(9Z-octadecenoyl)-sn-glycero-3-phosphate + octadecanoyl-CoA = 1-(9Z-octadecenoyl)-2-octadecanoyl-sn-glycero-3-phosphate + CoA. It carries out the reaction 1-acyl-sn-glycero-3-phospho-(1'-sn-glycerol) + (9Z)-octadecenoyl-CoA = 1-acyl-2-(9Z-octadecenoyl)-sn-glycero-3-phospho-(1'-sn-glycerol) + CoA. The catalysed reaction is a 1-acyl-sn-glycero-3-phospho-(1D-myo-inositol) + (9Z)-octadecenoyl-CoA = a 1-acyl-2-(9Z-octadecenoyl)-sn-glycero-3-phospho-(1D-myo-inositol) + CoA. The enzyme catalyses 1-hexadecanoyl-sn-glycero-3-phospho-(1D-myo-inositol) + hexadecanoyl-CoA = 1,2-dihexadecanoyl-sn-glycero-3-phospho-(1D-myo-inositol) + CoA. It catalyses the reaction 1-hexadecanoyl-sn-glycero-3-phospho-(1D-myo-inositol) + octadecanoyl-CoA = 1-hexadecanoyl-2-octadecanoyl-sn-glycero-3-phospho-(1D-myo-inositol) + CoA. It carries out the reaction 1-hexadecanoyl-sn-glycero-3-phospho-(1D-myo-inositol) + (9Z)-octadecenoyl-CoA = 1-hexadecanoyl-2-(9Z-octadecenoyl)-sn-glycero-3-phospho-(1D-myo-inositol) + CoA. The catalysed reaction is 1-hexadecanoyl-sn-glycero-3-phospho-(1D-myo-inositol) + (9Z,12Z)-octadecadienoyl-CoA = 1-hexadecanoyl-2-(9Z,12Z-octadecadienoyl)-sn-glycero-3-phospho-(1D-myo-inositol) + CoA. The enzyme catalyses 1-hexadecanoyl-sn-glycero-3-phospho-(1D-myo-inositol) + (5Z,8Z,11Z,14Z)-eicosatetraenoyl-CoA = 1-hexadecanoyl-2-(5Z,8Z,11Z,14Z-eicosatetraenoyl)-sn-glycero-3-phospho-D-myo-inositol + CoA. It catalyses the reaction 1-hexadecanoyl-sn-glycero-3-phospho-(1'-sn-glycerol) + hexadecanoyl-CoA = 1,2-dihexadecanoyl-sn-glycero-3-phospho-(1'-sn-glycerol) + CoA. It carries out the reaction 1-hexadecanoyl-sn-glycero-3-phospho-(1'-sn-glycerol) + octadecanoyl-CoA = 1-hexadecanoyl-2-octadecanoyl-sn-glycero-3-phospho-(1'-sn-glycerol) + CoA. The catalysed reaction is 1-hexadecanoyl-sn-glycero-3-phospho-(1'-sn-glycerol) + (9Z)-octadecenoyl-CoA = 1-hexadecanoyl-2-(9Z-octadecenoyl)-sn-glycero-3-phospho-(1'-sn-glycerol) + CoA. The enzyme catalyses 1-hexadecanoyl-sn-glycero-3-phospho-(1'-sn-glycerol) + (9Z,12Z)-octadecadienoyl-CoA = 1-hexadecanoyl-2-(9Z,12Z-octadecadienoyl)-sn-glycero-3-phospho-(1'-sn-glycerol) + CoA. It catalyses the reaction 1-tetradecanoyl-sn-glycero-3-phospho-(1'-sn-glycerol) + (9Z)-octadecenoyl-CoA = 1-tetradecanoyl-2-(9Z-octadecenoyl)-sn-glycero-3-phospho-(1'-sn-glycerol) + CoA. It carries out the reaction 1-octadecanoyl-sn-glycero-3-phospho-(1'-sn-glycerol) + (9Z)-octadecenoyl-CoA = 1-octadecanoyl-2-(9Z-octadecenoyl)-sn-glycero-3-phospho-(1'-sn-glycerol) + CoA. The catalysed reaction is 1-(9Z-octadecenoyl)-sn-glycero-3-phospho-(1'-sn-glycerol) + (9Z)-octadecenoyl-CoA = 1,2-di-(9Z-octadecenoyl)-sn-glycero-3-phospho-(1'-sn-glycerol) + CoA. The enzyme catalyses 1-hexadecanoyl-sn-glycero-3-phospho-(1D-myo-inositol) + dodecanoyl-CoA = 1-hexadecanoyl-2-dodecanoyl-sn-glycero-3-phospho-(1D-myo-inositol) + CoA. It catalyses the reaction 1',3'-bis-[1-acyl-sn-glycero-3-phospho]-glycerol + (9Z)-octadecenoyl-CoA = 1'-[1-acyl-2-(9Z)-octadecenoyl-sn-glycero-3-phospho],3'-[1-acyl,2-hydroxy-sn-glycero-3-phospho]-glycerol + CoA. It carries out the reaction 1'-[1,2-diacyl-sn-glycero-3-phospho],3'-[1-acyl-sn-glycero-3-phospho]-glycerol + (9Z)-octadecenoyl-CoA = 1'-[1,2-diacyl-sn-glycero-3-phospho],3'-[1-acyl,2-(9Z)-octadecenoyl-sn-glycero-3-phospho]-glycerol + CoA. The catalysed reaction is 1'-[1,2-diacyl-sn-glycero-3-phospho],3'-[1-acyl-sn-glycero-3-phospho]-glycerol + (9Z,12Z)-octadecadienoyl-CoA = 1'-[1,2-diacyl-sn-glycero-3-phospho],3'-[1-acyl,2-(9Z,12Z)-octadecadienoyl-sn-glycero-3-phospho]-glycerol + CoA. The enzyme catalyses 1'-[1,2-diacyl-sn-glycero-3-phospho],3'-[1-acyl-sn-glycero-3-phospho]-glycerol + dodecanoyl-CoA = 1'-[1,2-diacyl-sn-glycero-3-phospho],3'-[1-acyl,2-dodecanoyl-sn-glycero-3-phospho]-glycerol + CoA. It catalyses the reaction 1',3'-bis-[1-acyl-sn-glycero-3-phospho]-glycerol + dodecanoyl-CoA = 1'-[1-acyl-2-dodecanoyl-sn-glycero-3-phospho],3'-[1-acyl,2-hydroxy-sn-glycero-3-phospho]-glycerol + CoA. It carries out the reaction a 1-acyl-sn-glycero-3-phosphate + (9Z)-octadecenoyl-CoA = a 1-acyl-2-(9Z-octadecenoyl)-sn-glycero-3-phosphate + CoA. The catalysed reaction is 1',3'-bis-[1-acyl-sn-glycero-3-phospho]-glycerol + (9Z,12Z)-octadecadienoyl-CoA = 1'-[1-acyl-2-(9Z,12Z)-octadecadienoyl-sn-glycero-3-phospho],3'-[1-acyl,2-hydroxy-sn-glycero-3-phospho]-glycerol + CoA. The enzyme catalyses 1',3'-bis-[1-acyl-sn-glycero-3-phospho]-glycerol + hexadecanoyl-CoA = 1'-[1-acyl-2-hexadecanoyl-sn-glycero-3-phospho],3'-[1-acyl,2-hydroxy-sn-glycero-3-phospho]-glycerol + CoA. It catalyses the reaction 1',3'-bis-[1-acyl-sn-glycero-3-phospho]-glycerol + octadecanoyl-CoA = 1'-[1-acyl-2-octadecanoyl-sn-glycero-3-phospho],3'-[1-acyl,2-hydroxy-sn-glycero-3-phospho]-glycerol + CoA. It carries out the reaction 1'-[1,2-diacyl-sn-glycero-3-phospho],3'-[1-acyl-sn-glycero-3-phospho]-glycerol + octanoyl-CoA = 1'-[1,2-diacyl-sn-glycero-3-phospho],3'-[1-acyl,2-octanoyl-sn-glycero-3-phospho]-glycerol + CoA. The catalysed reaction is 1',3'-bis-[1-acyl-sn-glycero-3-phospho]-glycerol + octanoyl-CoA = 1'-[1-acyl-2-octanoyl-sn-glycero-3-phospho],3'-[1-acyl,2-hydroxy-sn-glycero-3-phospho]-glycerol + CoA. The enzyme catalyses 1'-[1,2-diacyl-sn-glycero-3-phospho],3'-[1-acyl-sn-glycero-3-phospho]-glycerol + hexadecanoyl-CoA = 1'-[1,2-diacyl-sn-glycero-3-phospho],3'-[1-acyl,2-hexadecanoyl-sn-glycero-3-phospho]-glycerol + CoA. It catalyses the reaction 1'-[1,2-diacyl-sn-glycero-3-phospho],3'-[1-acyl-sn-glycero-3-phospho]-glycerol + (5Z,8Z,11Z,14Z)-eicosatetraenoyl-CoA = 1'-[1,2-diacyl-sn-glycero-3-phospho],3'-[1-acyl,2-(5Z,8Z,11Z,14Z)-eicosatetraenoyl-sn-glycero-3-phospho]-glycerol + CoA. It carries out the reaction 1',3'-bis-[1-acyl-sn-glycero-3-phospho]-glycerol + (5Z,8Z,11Z,14Z)-eicosatetraenoyl-CoA = 1'-[1-acyl-2-(5Z,8Z,11Z,14Z)-eicosatetraenoyl-sn-glycero-3-phospho],3'-[1-acyl,2-hydroxy-sn-glycero-3-phospho]-glycerol + CoA. The catalysed reaction is a 1-acyl-sn-glycero-3-phospho-(1D-myo-inositol) + octadecanoyl-CoA = a 1-acyl-2-octadecanoyl-sn-glycero-3-phospho-(1D-myo-inositol) + CoA. The enzyme catalyses a 2-acyl-sn-glycero-3-phospho-D-myo-inositol + octadecanoyl-CoA = 1-octadecanoyl-2-acyl-sn-glycero-3-phospho-1D-myo-inositol + CoA. It functions in the pathway phospholipid metabolism; CDP-diacylglycerol biosynthesis; CDP-diacylglycerol from sn-glycerol 3-phosphate: step 2/3. Its function is as follows. Exhibits acyl-CoA:lysocardiolipin acyltransferase (ALCAT) activity; catalyzes the reacylation of lyso-cardiolipin to cardiolipin (CL), a key step in CL remodeling. Recognizes both monolysocardiolipin and dilysocardiolipin as substrates with a preference for linoleoyl-CoA and oleoyl-CoA as acyl donors. Also exhibits 1-acyl-sn-glycerol-3-phosphate acyltransferase activity (AGPAT) activity; converts 1-acyl-sn-glycerol-3- phosphate (lysophosphatidic acid or LPA) into 1,2-diacyl-sn-glycerol-3- phosphate (phosphatidic acid or PA) by incorporating an acyl moiety at the sn-2 position of the glycerol backbone. Possesses both lysophosphatidylinositol acyltransferase (LPIAT) and lysophosphatidylglycerol acyltransferase (LPGAT) activities. Required for establishment of the hematopoietic and endothelial lineages. In Gallus gallus (Chicken), this protein is Lysocardiolipin acyltransferase 1 (LCLAT1).